The following is a 540-amino-acid chain: uncharacterized protein (540 aa).

ABC transporter domains lie at 2–252 (IAVN…KLSQ) and 320–537 (LRVE…LTEL). ATP is bound at residue 34–41 (GANGAGKS).

The protein belongs to the ABC transporter superfamily.

This is an uncharacterized protein from Bacillus subtilis (strain 168).